A 254-amino-acid polypeptide reads, in one-letter code: Glucosamine-6-phosphate deaminase (254 aa).

D63 functions as the Proton acceptor; for enolization step in the catalytic mechanism. N129 (for ring-opening step) is an active-site residue. H131 serves as the catalytic Proton acceptor; for ring-opening step. The active-site For ring-opening step is E136.

The protein belongs to the glucosamine/galactosamine-6-phosphate isomerase family. NagB subfamily.

It carries out the reaction alpha-D-glucosamine 6-phosphate + H2O = beta-D-fructose 6-phosphate + NH4(+). It participates in amino-sugar metabolism; N-acetylneuraminate degradation; D-fructose 6-phosphate from N-acetylneuraminate: step 5/5. In terms of biological role, catalyzes the reversible isomerization-deamination of glucosamine 6-phosphate (GlcN6P) to form fructose 6-phosphate (Fru6P) and ammonium ion. The protein is Glucosamine-6-phosphate deaminase of Exiguobacterium sp. (strain ATCC BAA-1283 / AT1b).